Consider the following 979-residue polypeptide: Pimaradiene synthase pbcA (979 aa).

The VYDTAW motif signature appears at 34-39 (VYDTAW). A DXDD B-type cyclization motif motif is present at residues 328 to 331 (DADD). Residues Asp665, Glu669, Asn865, Asp866, Ser869, and Asp873 each contribute to the Mg(2+) site. The DEXXE A-type cyclization motif motif lies at 665-669 (DEFME).

It belongs to the terpene synthase family. Mg(2+) is required as a cofactor.

It carries out the reaction (2E,6E,10E)-geranylgeranyl diphosphate = ent-copalyl diphosphate. The enzyme catalyses ent-copalyl diphosphate = ent-pimara-8(14),15-diene + diphosphate. It functions in the pathway secondary metabolite biosynthesis; terpenoid biosynthesis. Functionally, bifunctional terpene synthase; part of the gene cluster that mediates the biosynthesis of the diterpene ent-pimara-8(14),15-diene (PD). Within the cluster, the HMG-CoA reductase AN1593 functions in the mevalonate pathway, which produces isoprenoid precursors. The geranylgeranyl pyrophosphate (GGPP) synthase AN1592 is needed in the formation of GGPP, the precursor for diterpenes. Lastly, the pimaradiene synthase pbcA performs the 2 cyclization steps that convert GGPP to ent-pimara-8(14),15-diene with ent-copalyl diphosphate as an intermediate. The putative roles of the remaining cluster enzymes in ent-pimara-8(14),15-diene biosynthesis is unclear. The cytochrome P450 monooxygenase AN1598, the glutathione S-transferase AN1595, the oxidoreductases AN1596 and AN1597 probably function as decorative enzymes. It is possible that in biological conditions the compound is oxidized to ent-pimara-8(14),15-dien-19-oic acid, which is a bioactive diterpene compound predominant in many plant extracts. This is Pimaradiene synthase pbcA from Emericella nidulans (strain FGSC A4 / ATCC 38163 / CBS 112.46 / NRRL 194 / M139) (Aspergillus nidulans).